The following is a 313-amino-acid chain: MEKRKIILDCDPGHDDAIAIMMAAKHPVIDLLGITIVAGNQTLDKTLINGLNVCQKLEINVPVYAGMPQPIMRQQIVADNIHGETGLDGPVFGPLTRQAESTHAVKYIIDTLMASDGDITLVPVGPLSNIAVAMRMQPAILPKIREIVLMGGAYGTGNFTPSAEFNIFADPEAARVVFTSGVPLVMMGLDLTNQTVCTPDVIARMERVGGPAGELFSDIMNFTLKTQFENYGLAGGPVHDATCIGYLINPDGIKTQEMYVEVDVNSGPCYGRTVCDELGVLGKPANTKVGITIDTDWFWGLVEECVRGYIKTH.

The active-site Proton acceptor is the D11. Positions 11, 16, and 124 each coordinate Ca(2+). Residues Q227 and H239 each contribute to the substrate site. D240 contacts Ca(2+).

Belongs to the IUNH family. RihB subfamily. Homotetramer. Ca(2+) serves as cofactor.

The enzyme catalyses a pyrimidine ribonucleoside + H2O = a pyrimidine nucleobase + D-ribose. Functionally, hydrolyzes cytidine or uridine to ribose and cytosine or uracil, respectively. Has a clear preference for cytidine over uridine. Strictly specific for ribonucleosides. In Escherichia coli O17:K52:H18 (strain UMN026 / ExPEC), this protein is Pyrimidine-specific ribonucleoside hydrolase RihB.